Here is a 101-residue protein sequence, read N- to C-terminus: Omega-scoloptoxin(10)-Ssd1b (101 aa).

An N-terminal signal peptide occupies residues 1 to 23 (MNKLTIIFFTILLLTYIIVEKEA).

Contains 3 disulfide bonds. Expressed by the venom gland.

The protein resides in the secreted. Its function is as follows. Voltage-gated calcium channel inhibitor. The sequence is that of Omega-scoloptoxin(10)-Ssd1b from Scolopendra dehaani (Thai centipede).